Here is a 296-residue protein sequence, read N- to C-terminus: 4-hydroxy-tetrahydrodipicolinate synthase (296 aa).

Thr-49 is a binding site for pyruvate. The active-site Proton donor/acceptor is Tyr-137. Lys-165 serves as the catalytic Schiff-base intermediate with substrate. Ile-208 contacts pyruvate.

Belongs to the DapA family. Homotetramer; dimer of dimers.

The protein localises to the cytoplasm. It carries out the reaction L-aspartate 4-semialdehyde + pyruvate = (2S,4S)-4-hydroxy-2,3,4,5-tetrahydrodipicolinate + H2O + H(+). Its pathway is amino-acid biosynthesis; L-lysine biosynthesis via DAP pathway; (S)-tetrahydrodipicolinate from L-aspartate: step 3/4. In terms of biological role, catalyzes the condensation of (S)-aspartate-beta-semialdehyde [(S)-ASA] and pyruvate to 4-hydroxy-tetrahydrodipicolinate (HTPA). The chain is 4-hydroxy-tetrahydrodipicolinate synthase from Ehrlichia canis (strain Jake).